The primary structure comprises 705 residues: Tetratricopeptide repeat protein 12 (705 aa).

Threonine 71 is subject to Phosphothreonine. TPR repeat units follow at residues 106–139 (ADAL…LKDM), 140–173 (KVLY…DEKC), and 174–207 (TKAY…NPKL).

Expressed in testis and in epithelial cells of trachea and bronchial tube.

Its subcellular location is the cytoplasm. In terms of biological role, cytoplasmic protein that plays a role in the proper assembly of dynein arm complexes in motile cilia in both respiratory cells and sperm flagella. This Homo sapiens (Human) protein is Tetratricopeptide repeat protein 12 (TTC12).